The following is a 149-amino-acid chain: Large ribosomal subunit protein uL15 (149 aa).

The disordered stretch occupies residues 14 to 57 (KQRKRVGRGSGSGWGCTSGKGNKGQNARSGGGVRPGFEGGQMPL). 2 stretches are compositionally biased toward gly residues: residues 21 to 35 (RGSG…GKGN) and 42 to 52 (SGGGVRPGFEG).

Belongs to the universal ribosomal protein uL15 family. As to quaternary structure, part of the 50S ribosomal subunit.

In terms of biological role, binds to the 23S rRNA. In Oleidesulfovibrio alaskensis (strain ATCC BAA-1058 / DSM 17464 / G20) (Desulfovibrio alaskensis), this protein is Large ribosomal subunit protein uL15.